Consider the following 90-residue polypeptide: Probable Fe(2+)-trafficking protein (90 aa).

The protein belongs to the Fe(2+)-trafficking protein family.

In terms of biological role, could be a mediator in iron transactions between iron acquisition and iron-requiring processes, such as synthesis and/or repair of Fe-S clusters in biosynthetic enzymes. This is Probable Fe(2+)-trafficking protein from Variovorax paradoxus (strain S110).